The primary structure comprises 236 residues: T-cell surface glycoprotein CD8 alpha chain (236 aa).

The N-terminal stretch at 1 to 26 is a signal peptide; that stretch reads MASRVICFLSLNLLLLDVITRLQVSG. The Ig-like V-type domain occupies 27–130; the sequence is QLQLSPKKVD…ITSNSVMYFS (104 aa). Over 27 to 189 the chain is Extracellular; sequence QLQLSPKKVD…MGLGFACDIY (163 aa). A disulfide bridge links C47 with C119. N-linked (GlcNAc...) asparagine glycosylation is present at N63. The O-linked (GalNAc...) threonine; partial glycan is linked to T144. O-linked (GalNAc...) threonine glycosylation is found at T148, T152, T158, and T160. Positions 150 to 170 are disordered; sequence APTPVPPPTGTPRPLRPEACR. The chain crosses the membrane as a helical span at residues 190–210; the sequence is IWAPLAGICAVLLLSLVITLI. The S-palmitoyl cysteine moiety is linked to residue C211. Over 211–236 the chain is Cytoplasmic; that stretch reads CCHRNRRRVCKCPRPLVKPRPSEKFV.

Forms disulfide-linked heterodimers with CD8B at the cell surface. Also forms homodimers in several cell types including NK-cells or peripheral blood T-lymphocytes. Interacts with the MHC class I HLA-A/B2M dimer. Interacts with LCK in a zinc-dependent manner. Palmitoylated, but association with CD8B seems to be more important for the enrichment of CD8A in lipid rafts. In terms of processing, O-glycosylated. Post-translationally, phosphorylated in cytotoxic T-lymphocytes (CTLs) following activation.

Its subcellular location is the cell membrane. Functionally, integral membrane glycoprotein that plays an essential role in the immune response and serves multiple functions in responses against both external and internal offenses. In T-cells, functions primarily as a coreceptor for MHC class I molecule:peptide complex. The antigens presented by class I peptides are derived from cytosolic proteins while class II derived from extracellular proteins. Interacts simultaneously with the T-cell receptor (TCR) and the MHC class I proteins presented by antigen presenting cells (APCs). In turn, recruits the Src kinase LCK to the vicinity of the TCR-CD3 complex. LCK then initiates different intracellular signaling pathways by phosphorylating various substrates ultimately leading to lymphokine production, motility, adhesion and activation of cytotoxic T-lymphocytes (CTLs). This mechanism enables CTLs to recognize and eliminate infected cells and tumor cells. In NK-cells, the presence of CD8A homodimers at the cell surface provides a survival mechanism allowing conjugation and lysis of multiple target cells. CD8A homodimer molecules also promote the survival and differentiation of activated lymphocytes into memory CD8 T-cells. The protein is T-cell surface glycoprotein CD8 alpha chain (Cd8a) of Rattus norvegicus (Rat).